We begin with the raw amino-acid sequence, 248 residues long: Adenosylcobinamide-GDP ribazoletransferase (248 aa).

7 helical membrane passes run 24-44 (EINL…IGAW), 70-90 (IIIT…GLFS), 106-126 (VGAN…SLFL), 134-154 (IGWL…LLFA), 168-188 (IFLG…LVAL), 189-209 (GAFF…FTII), and 228-248 (AGGQ…WGLI).

Belongs to the CobS family. Mg(2+) is required as a cofactor.

The protein localises to the cell membrane. The catalysed reaction is alpha-ribazole + adenosylcob(III)inamide-GDP = adenosylcob(III)alamin + GMP + H(+). It carries out the reaction alpha-ribazole 5'-phosphate + adenosylcob(III)inamide-GDP = adenosylcob(III)alamin 5'-phosphate + GMP + H(+). The protein operates within cofactor biosynthesis; adenosylcobalamin biosynthesis; adenosylcobalamin from cob(II)yrinate a,c-diamide: step 7/7. Its function is as follows. Joins adenosylcobinamide-GDP and alpha-ribazole to generate adenosylcobalamin (Ado-cobalamin). Also synthesizes adenosylcobalamin 5'-phosphate from adenosylcobinamide-GDP and alpha-ribazole 5'-phosphate. In Listeria monocytogenes serotype 4b (strain F2365), this protein is Adenosylcobinamide-GDP ribazoletransferase.